Here is a 365-residue protein sequence, read N- to C-terminus: Caffeic acid 3-O-methyltransferase 1 (365 aa).

130–136 (MNQDKVL) serves as a coordination point for substrate. The interval 162–180 (AFEYHGTDPRFNKVFNKGM) is substrate binding. Residues glycine 208, aspartate 231, aspartate 251, methionine 252, and lysine 265 each coordinate S-adenosyl-L-methionine. Catalysis depends on histidine 269, which acts as the Proton acceptor.

This sequence belongs to the class I-like SAM-binding methyltransferase superfamily. Cation-independent O-methyltransferase family. COMT subfamily. In terms of assembly, homodimer.

It catalyses the reaction (E)-caffeate + S-adenosyl-L-methionine = (E)-ferulate + S-adenosyl-L-homocysteine + H(+). It participates in aromatic compound metabolism; phenylpropanoid biosynthesis. Catalyzes the conversion of caffeic acid to ferulic acid and of 5-hydroxyferulic acid to sinapic acid. The resulting products may subsequently be converted to the corresponding alcohols that are incorporated into lignins. The sequence is that of Caffeic acid 3-O-methyltransferase 1 (HOMT1) from Populus kitakamiensis (Aspen).